Reading from the N-terminus, the 136-residue chain is Congerin-2 (136 aa).

Ser2 carries the N-acetylserine modification. A Galectin domain is found at 4-136 (RAEVRNIPFK…DARLTFVRLE (133 aa)). 70–76 (WQQEERS) serves as a coordination point for a beta-D-galactoside.

In terms of assembly, homodimer.

This protein binds beta-galactoside. Its physiological function is not yet known. The chain is Congerin-2 from Conger myriaster (Conger eel).